Consider the following 144-residue polypeptide: Large ribosomal subunit protein eL27 (144 aa).

Belongs to the eukaryotic ribosomal protein eL27 family.

Its subcellular location is the cytoplasm. In Tetrahymena thermophila, this protein is Large ribosomal subunit protein eL27 (RPL27).